The primary structure comprises 192 residues: Transcription termination/antitermination protein NusG (192 aa).

Residues 140 to 168 enclose the KOW domain; it reads VGEIVTVTDGPFETFMGTVEEIDQEKNRL.

The protein belongs to the NusG family.

Functionally, participates in transcription elongation, termination and antitermination. The chain is Transcription termination/antitermination protein NusG from Rickettsia conorii (strain ATCC VR-613 / Malish 7).